Reading from the N-terminus, the 204-residue chain is Protein GrpE (204 aa).

Basic and acidic residues-rich tracts occupy residues 1 to 21 (MEEL…EVKG) and 36 to 46 (EEKIETEVEQK). The tract at residues 1–46 (MEELEKDKIERNEEMSEEVKGEGPPSELEQSEEVVEEKIETEVEQK) is disordered.

It belongs to the GrpE family. Homodimer.

Its subcellular location is the cytoplasm. Participates actively in the response to hyperosmotic and heat shock by preventing the aggregation of stress-denatured proteins, in association with DnaK and GrpE. It is the nucleotide exchange factor for DnaK and may function as a thermosensor. Unfolded proteins bind initially to DnaJ; upon interaction with the DnaJ-bound protein, DnaK hydrolyzes its bound ATP, resulting in the formation of a stable complex. GrpE releases ADP from DnaK; ATP binding to DnaK triggers the release of the substrate protein, thus completing the reaction cycle. Several rounds of ATP-dependent interactions between DnaJ, DnaK and GrpE are required for fully efficient folding. In Caldanaerobacter subterraneus subsp. tengcongensis (strain DSM 15242 / JCM 11007 / NBRC 100824 / MB4) (Thermoanaerobacter tengcongensis), this protein is Protein GrpE.